The following is a 217-amino-acid chain: Ras-related protein Rab-39A (217 aa).

Residues Ser-17, Gly-20, Lys-21, Ser-22, Cys-23, and Thr-44 each contribute to the GTP site. A Mg(2+)-binding site is contributed by Ser-22. The switch-I stretch occupies residues 39–47; that stretch reads PACDPTVGV. Mg(2+)-binding residues include Thr-44 and Asp-68. Positions 71, 127, 128, 130, 158, and 159 each coordinate GTP. The segment at 71 to 87 is switch-II; sequence GQERFRSITRSYYRNSV. 2 S-geranylgeranyl cysteine lipidation sites follow: Cys-215 and Cys-217. Position 217 is a cysteine methyl ester (Cys-217).

This sequence belongs to the small GTPase superfamily. Rab family. As to quaternary structure, interacts (GDP-bound) with C9orf72; C9orf72 acts as a GEF for RAB39A. Interacts (GTP-bound) with HOPS complex components VPS39 and VPS41, and STX17; interaction between HOPS components and RAB39A contributes to obtaining a functional HOPS complex that promotes membrane fusion driven by STX17-SNAP29-VAMP8. Interacts with BECN1. Probably associates with the PI3K (PI3KC3/PI3K-III/class III phosphatidylinositol 3-kinase) complex. Interacts with UACA. Interacts with isoform a of RASSF1. Does not interact with isoform c of RASSF1. Mg(2+) serves as cofactor. Post-translationally, prenylated. Prenylation is required for association with cellular membranes.

The protein resides in the cell membrane. The protein localises to the cytoplasmic vesicle. It localises to the phagosome membrane. It is found in the late endosome membrane. Its subcellular location is the lysosome membrane. The protein resides in the autolysosome membrane. It carries out the reaction GTP + H2O = GDP + phosphate + H(+). Regulated by guanine nucleotide exchange factors (GEFs) including c9Orf72, which promote the exchange of bound GDP for free GTP. Regulated by GTPase activating proteins (GAPs) which increase the GTP hydrolysis activity. Inhibited by GDP dissociation inhibitors (GDIs). In terms of biological role, the small GTPases Rab are key regulators of intracellular membrane trafficking, from the formation of transport vesicles to their fusion with membranes. Rabs cycle between an inactive GDP-bound form and an active GTP-bound form that is able to recruit to membranes different sets of downstream effectors directly responsible for vesicle formation, movement, tethering and fusion. RAB39A regulates autophagosome-lysosome fusion via recruitment of the HOPS endosomal tethering complex onto lysosomes; this process involves lysosomal RAB39A and autophagosomal RAB2A recruitment of HOPS subcomplexes VPS41-VPS16-VPS18-VPS33A and VPS39-VPS11, respectively, which assemble into a functional complex to mediate membrane tethering and SNAREs-driven membrane fusion. Also negatively regulates lipopolysaccharide (LPS)-induced autophagosome formation in macrophages, possibly by implicating PI3K. Promotes the delivery of MHC-I molecules from the ER to phagosomes and the generation of peptide-loaded MHC-I complexes in phagosomes, thus enhancing antigen cross-presentation by dendritic cells. Plays a role in the maturation and acidification of phagosomes that engulf pathogens, such as S.aureus and M.tuberculosis. Plays a role in the fusion of phagosomes with lysosomes. May be involved in multiple neurite formation. The polypeptide is Ras-related protein Rab-39A (Mus musculus (Mouse)).